Here is a 288-residue protein sequence, read N- to C-terminus: Shikimate dehydrogenase (NADP(+)) (288 aa).

Shikimate is bound by residues 18 to 20 and threonine 65; that span reads SRS. Lysine 69 functions as the Proton acceptor in the catalytic mechanism. Glutamate 81 contacts NADP(+). Residues asparagine 90 and aspartate 106 each coordinate shikimate. NADP(+) is bound by residues 131–135, 155–160, and methionine 223; these read GAGGA and NRTLAK. Tyrosine 225 lines the shikimate pocket. Glycine 246 serves as a coordination point for NADP(+).

This sequence belongs to the shikimate dehydrogenase family. As to quaternary structure, homodimer.

The enzyme catalyses shikimate + NADP(+) = 3-dehydroshikimate + NADPH + H(+). It participates in metabolic intermediate biosynthesis; chorismate biosynthesis; chorismate from D-erythrose 4-phosphate and phosphoenolpyruvate: step 4/7. Functionally, involved in the biosynthesis of the chorismate, which leads to the biosynthesis of aromatic amino acids. Catalyzes the reversible NADPH linked reduction of 3-dehydroshikimate (DHSA) to yield shikimate (SA). The chain is Shikimate dehydrogenase (NADP(+)) from Verminephrobacter eiseniae (strain EF01-2).